A 174-amino-acid polypeptide reads, in one-letter code: UPF0336 protein MAP_3996c (174 aa).

In terms of domain architecture, MaoC-like spans 11–131 (IGSHYRAPDY…VLAEIRSEVT (121 aa)).

The protein belongs to the UPF0336 family.

This is UPF0336 protein MAP_3996c from Mycolicibacterium paratuberculosis (strain ATCC BAA-968 / K-10) (Mycobacterium paratuberculosis).